The primary structure comprises 318 residues: Thymidylate synthase (318 aa).

DUMP-binding positions include Arg-25 and 180–181 (RR). Cys-200 (nucleophile) is an active-site residue. Residues 220-223 (RSGD), Asn-231, and 261-263 (HIY) contribute to the dUMP site. Asp-223 lines the (6R)-5,10-methylene-5,6,7,8-tetrahydrofolate pocket. (6R)-5,10-methylene-5,6,7,8-tetrahydrofolate is bound at residue Ala-317.

Belongs to the thymidylate synthase family. Bacterial-type ThyA subfamily. In terms of assembly, homodimer.

It localises to the cytoplasm. It carries out the reaction dUMP + (6R)-5,10-methylene-5,6,7,8-tetrahydrofolate = 7,8-dihydrofolate + dTMP. It functions in the pathway pyrimidine metabolism; dTTP biosynthesis. Its function is as follows. Catalyzes the reductive methylation of 2'-deoxyuridine-5'-monophosphate (dUMP) to 2'-deoxythymidine-5'-monophosphate (dTMP) while utilizing 5,10-methylenetetrahydrofolate (mTHF) as the methyl donor and reductant in the reaction, yielding dihydrofolate (DHF) as a by-product. This enzymatic reaction provides an intracellular de novo source of dTMP, an essential precursor for DNA biosynthesis. The sequence is that of Thymidylate synthase from Bacillus cereus (strain ZK / E33L).